Here is a 104-residue protein sequence, read N- to C-terminus: Large ribosomal subunit protein uL24 (104 aa).

The protein belongs to the universal ribosomal protein uL24 family. In terms of assembly, part of the 50S ribosomal subunit.

Functionally, one of two assembly initiator proteins, it binds directly to the 5'-end of the 23S rRNA, where it nucleates assembly of the 50S subunit. Its function is as follows. One of the proteins that surrounds the polypeptide exit tunnel on the outside of the subunit. The protein is Large ribosomal subunit protein uL24 of Pseudomonas entomophila (strain L48).